The following is a 319-amino-acid chain: Thiamine-monophosphate kinase (319 aa).

D28, T43, T44, and D45 together coordinate Mg(2+). Residue H52 participates in substrate binding. D73 serves as a coordination point for Mg(2+). ATP is bound by residues Y104, 121–122, and R145; that span reads GD. D122 provides a ligand contact to Mg(2+). Residue D218 participates in Mg(2+) binding. ATP is bound at residue S220. D221 provides a ligand contact to Mg(2+). Residues E268 and Y315 each coordinate substrate.

It belongs to the thiamine-monophosphate kinase family.

It catalyses the reaction thiamine phosphate + ATP = thiamine diphosphate + ADP. It participates in cofactor biosynthesis; thiamine diphosphate biosynthesis; thiamine diphosphate from thiamine phosphate: step 1/1. Functionally, catalyzes the ATP-dependent phosphorylation of thiamine-monophosphate (TMP) to form thiamine-pyrophosphate (TPP), the active form of vitamin B1. The chain is Thiamine-monophosphate kinase from Methanocaldococcus jannaschii (strain ATCC 43067 / DSM 2661 / JAL-1 / JCM 10045 / NBRC 100440) (Methanococcus jannaschii).